Consider the following 381-residue polypeptide: MIISASTDYRAAAQRKLPPFLFHYADGGAYAEHTLRHNVSDLASIALRQRVLNNMSELSLSTRLFDETLSMPVALAPVGLTGMYARRGEVQAARAAAAHGIPFTMSTVSVCPIEEVAPAIDRPMWFQLYVLKDRGFMRNALERAKAAGVKTLVFTVDMPVPGARYRDAHSGMSGKNGPLRRVLQAMTHPEWAWDVGVMGRPHDLGNISKYRGNPTGLADYIGWLGNNFDPSISWKDLEWIREYWDGPMIIKGILDADDARDAVKFGADGIVVSNHGGRQLDGVLSSARALPAIADAVKGDLKILADSGIRSGLDVVRMIALGADTVLIGRAFLYALAVHGQAGVKNLLELFEKEMRVAMVLTGAKSISEITRDSLVRELGA.

Residues 1–380 (MIISASTDYR…TRDSLVRELG (380 aa)) form the FMN hydroxy acid dehydrogenase domain. Substrate is bound at residue Y24. Residues S106 and Q127 each coordinate FMN. Y129 provides a ligand contact to substrate. An FMN-binding site is contributed by T155. Position 164 (R164) interacts with substrate. K251 is an FMN binding site. H275 functions as the Proton acceptor in the catalytic mechanism. R278 is a substrate binding site. 306–330 (DSGIRSGLDVVRMIALGADTVLIGR) is an FMN binding site.

The protein belongs to the FMN-dependent alpha-hydroxy acid dehydrogenase family. In terms of assembly, homotetramer. FMN is required as a cofactor.

The protein resides in the cell inner membrane. It catalyses the reaction (S)-lactate + A = pyruvate + AH2. In terms of biological role, catalyzes the conversion of L-lactate to pyruvate. Is coupled to the respiratory chain. This Pseudomonas putida (strain GB-1) protein is L-lactate dehydrogenase.